The chain runs to 335 residues: Fructose-1,6-bisphosphatase class 1 (335 aa).

Mg(2+) contacts are provided by Glu-92, Asp-114, Leu-116, and Asp-117. Residues 117–120 (DGSS), Asn-209, and Lys-275 each bind substrate. Glu-281 is a binding site for Mg(2+).

It belongs to the FBPase class 1 family. Homotetramer. Mg(2+) is required as a cofactor.

Its subcellular location is the cytoplasm. The enzyme catalyses beta-D-fructose 1,6-bisphosphate + H2O = beta-D-fructose 6-phosphate + phosphate. It participates in carbohydrate biosynthesis; gluconeogenesis. This is Fructose-1,6-bisphosphatase class 1 from Paracidovorax citrulli (strain AAC00-1) (Acidovorax citrulli).